The chain runs to 226 residues: Cytidylate kinase (226 aa).

10-18 is a binding site for ATP; the sequence is GPASSGKST.

The protein belongs to the cytidylate kinase family. Type 1 subfamily.

The protein resides in the cytoplasm. The catalysed reaction is CMP + ATP = CDP + ADP. It carries out the reaction dCMP + ATP = dCDP + ADP. In Streptococcus pyogenes serotype M5 (strain Manfredo), this protein is Cytidylate kinase.